The sequence spans 540 residues: Zinc transporter ZIP5 (540 aa).

A signal peptide spans 1 to 20 (MMGSPVSHLLAGFCVWVVLG). Residues 21-212 (WVGGSVPNLG…PAPPGDLLSA (192 aa)) lie on the Extracellular side of the membrane. An N-linked (GlcNAc...) asparagine glycan is attached at Asn50. The disordered stretch occupies residues 78-101 (HGPLTGRAASPAADNSTHRPQNPE). Positions 90 to 101 (ADNSTHRPQNPE) are enriched in polar residues. Residue Asn160 is glycosylated (N-linked (GlcNAc...) asparagine). A helical transmembrane segment spans residues 213–233 (LLQSALAVLLLSLPSPLSLLL). At 234–244 (LRLLGPRLLRP) the chain is on the cytoplasmic side. Residues 245-265 (LLGFLGALAVGTLCGDALLHL) traverse the membrane as a helical segment. The Extracellular portion of the chain corresponds to 266 to 287 (LPHAQEGRHAGPGGLPEKDLGP). A helical membrane pass occupies residues 288–308 (GLSVLGGLFLLFVLENMLGLL). Topologically, residues 309–444 (RHRGLRPRCC…LLQSGLSFRR (136 aa)) are cytoplasmic. The interval 324–377 (NLETRNLDPENGSGMALQPLQAAPEPGAQGQREKNSQHPPALAPPGHQGHSHGH) is disordered. The residue at position 336 (Ser336) is a Phosphoserine. A Pros-methylhistidine modification is found at His375. Residues 445–465 (LLLLSLVSGALGLGGAVLGVG) form a helical membrane-spanning segment. The Extracellular portion of the chain corresponds to 466-470 (LSLGP). Residues 471–491 (VPLTPWVFGVTAGVFLYVALV) traverse the membrane as a helical segment. Residues 492–508 (DMLPALLRPPEPLPTPH) are Cytoplasmic-facing. A helical transmembrane segment spans residues 509 to 529 (VLLQGLGLLLGGGLMLAITLL). Residues 530–540 (EERLLPVTTEG) are Extracellular-facing.

The protein belongs to the ZIP transporter (TC 2.A.5) family. As to quaternary structure, homodimer. Post-translationally, methylated at His-375 by METTL9. N-Glycosylated. Expressed in liver, kidney, pancreas, small intestine, colon, spleen, fetal liver and fetal kidney.

Its subcellular location is the basolateral cell membrane. The catalysed reaction is Zn(2+)(in) = Zn(2+)(out). In terms of biological role, uniporter that transports zinc(2+) into polarized cells of enterocytes, pancreatic acinar and endoderm cells across the basolateral membrane and participates, notably, in zinc excretion from the intestine by the uptake of zinc from the blood into the intestine. The transport mechanism is temperature- and concentration-dependent and saturable. In addition, is also a high affinity copper transporter in vitro. Also may regulate glucose-stimulated insulin secretion (GSIS) in islets primarily through the zinc-activated SIRT1-PPARGC1A axis. Could regulate the BMP/TGF-beta (bone morphogenetic protein/transforming growth factor-beta) signaling pathway and modulates extracellular matrix (ECM) proteins of the sclera. Plays a role in eye development. This Homo sapiens (Human) protein is Zinc transporter ZIP5.